The sequence spans 476 residues: ATP synthase subunit beta (476 aa).

154 to 161 (GGAGVGKT) lines the ATP pocket.

This sequence belongs to the ATPase alpha/beta chains family. F-type ATPases have 2 components, CF(1) - the catalytic core - and CF(0) - the membrane proton channel. CF(1) has five subunits: alpha(3), beta(3), gamma(1), delta(1), epsilon(1). CF(0) has four main subunits: a(1), b(1), b'(1) and c(9-12).

The protein localises to the cell inner membrane. The enzyme catalyses ATP + H2O + 4 H(+)(in) = ADP + phosphate + 5 H(+)(out). Its function is as follows. Produces ATP from ADP in the presence of a proton gradient across the membrane. The catalytic sites are hosted primarily by the beta subunits. The polypeptide is ATP synthase subunit beta (Rhodopseudomonas palustris (strain HaA2)).